We begin with the raw amino-acid sequence, 366 residues long: Aminomethyltransferase (366 aa).

This sequence belongs to the GcvT family. The glycine cleavage system is composed of four proteins: P, T, L and H.

The enzyme catalyses N(6)-[(R)-S(8)-aminomethyldihydrolipoyl]-L-lysyl-[protein] + (6S)-5,6,7,8-tetrahydrofolate = N(6)-[(R)-dihydrolipoyl]-L-lysyl-[protein] + (6R)-5,10-methylene-5,6,7,8-tetrahydrofolate + NH4(+). Its function is as follows. The glycine cleavage system catalyzes the degradation of glycine. This is Aminomethyltransferase from Thermosynechococcus vestitus (strain NIES-2133 / IAM M-273 / BP-1).